The chain runs to 445 residues: Ribosome biogenesis protein YTM1 (445 aa).

The interval 8-89 (VKVKFFTREQ…EAVLNVEYTR (82 aa)) is ubiquitin-like (UBL) domain. Positions 99-445 (SFSNEDWVSA…FNKGDNIFKN (347 aa)) are sufficient for interaction with ERB1 and association with 66S pre-ribosomes. WD repeat units follow at residues 101–138 (SNED…EKQY), 140–178 (GHTG…VKHV), 195–232 (GHQA…MTAV), 270–310 (SHKA…CVDT), 312–351 (STSY…SAKI), 358–398 (GHKN…SIYT), and 409–445 (GIND…IFKN).

The protein belongs to the WD repeat WDR12/YTM1 family. As to quaternary structure, component of the NOP7 complex, composed of ERB1, NOP7 and YTM1. The complex is held together by ERB1, which interacts with NOP7 via its N-terminal domain and with YTM1 via a high-affinity interaction between the seven-bladed beta-propeller domains of the 2 proteins. The NOP7 complex associates with the 66S pre-ribosome. Interacts (via UBL domain) with MDN1 (via VWFA/MIDAS domain).

It is found in the nucleus. Its subcellular location is the nucleolus. The protein localises to the nucleoplasm. Functionally, component of the NOP7 complex, which is required for maturation of the 25S and 5.8S ribosomal RNAs and formation of the 60S ribosome. The polypeptide is Ribosome biogenesis protein YTM1 (Eremothecium gossypii (strain ATCC 10895 / CBS 109.51 / FGSC 9923 / NRRL Y-1056) (Yeast)).